A 222-amino-acid chain; its full sequence is UPF0441 protein CKO_04429 (222 aa).

Residues 177-194 (TVPKTAMAPKPATTTTVT) are compositionally biased toward low complexity. A disordered region spans residues 177-222 (TVPKTAMAPKPATTTTVTRGGFGESVAKQSTMQRSATGTSNRSMGG). Over residues 203 to 222 (AKQSTMQRSATGTSNRSMGG) the composition is skewed to polar residues.

Belongs to the UPF0441 family.

The chain is UPF0441 protein CKO_04429 from Citrobacter koseri (strain ATCC BAA-895 / CDC 4225-83 / SGSC4696).